The following is a 352-amino-acid chain: MASLTDLINLDLSDTTDKFIAEYIWIDAVGGLRSKARTLSGPVDDPTKLPKWNFDGSSTGQGPGDDSEVIIYPQAIFKDPFRRGNHILVMCDTYTPAGEPIPTNKRCNAAKIFSHPDVAAEVPWFGIEQEYTLLKKEVNCPIGCPTGGYPGPQGPYYCGIGADKAFGRDIVDAHYKACLYAGINISGINGEVMPGQWEFQVGPAVGISAGDELWVARYILERITEIAGVVVSLDPKPIPGDWNGAGAHTNYSTKSMRNEGGFEIIKKAIAKLETKHAQHIAAYGEGNERRLTGKHETASIHKFSWGVANRGASVRVGRDTEKEGKGYFEDRRPASNMEPYVVTSMIAETTIL.

The GS beta-grasp domain maps to 19–98 (FIAEYIWIDA…VMCDTYTPAG (80 aa)). The region spanning 105-352 (KRCNAAKIFS…TSMIAETTIL (248 aa)) is the GS catalytic domain.

Belongs to the glutamine synthetase family. In terms of assembly, homooctamer.

The protein resides in the cytoplasm. It catalyses the reaction L-glutamate + NH4(+) + ATP = L-glutamine + ADP + phosphate + H(+). The chain is Glutamine synthetase cytosolic isozyme (GLN1) from Daucus carota (Wild carrot).